The sequence spans 190 residues: Inosine triphosphate pyrophosphatase (190 aa).

Thr-9–Lys-14 provides a ligand contact to ITP. Glu-39 serves as a coordination point for Mg(2+). Residues Lys-51, Asp-67–Thr-68, Lys-84, Phe-144–Asp-147, Lys-167, and His-172–Arg-173 contribute to the ITP site.

The protein belongs to the HAM1 NTPase family. Homodimer. Requires Mg(2+) as cofactor. It depends on Mn(2+) as a cofactor.

The protein localises to the cytoplasm. The catalysed reaction is ITP + H2O = IMP + diphosphate + H(+). It catalyses the reaction dITP + H2O = dIMP + diphosphate + H(+). It carries out the reaction XTP + H2O = XMP + diphosphate + H(+). Its function is as follows. Pyrophosphatase that hydrolyzes non-canonical purine nucleotides such as inosine triphosphate (ITP), deoxyinosine triphosphate (dITP) or xanthosine 5'-triphosphate (XTP) to their respective monophosphate derivatives. The enzyme does not distinguish between the deoxy- and ribose forms. Probably excludes non-canonical purines from RNA and DNA precursor pools, thus preventing their incorporation into RNA and DNA and avoiding chromosomal lesions. This is Inosine triphosphate pyrophosphatase from Pediculus humanus subsp. corporis (Body louse).